Consider the following 281-residue polypeptide: UPF0162 protein XF_1494 (281 aa).

2 TPR repeats span residues 193-226 and 227-260; these read VRIL…VPNQ and PEAL…YPST.

The protein belongs to the UPF0162 family.

In Xylella fastidiosa (strain 9a5c), this protein is UPF0162 protein XF_1494.